Here is a 215-residue protein sequence, read N- to C-terminus: TLD domain-containing protein 2 (215 aa).

The disordered stretch occupies residues 1–46 (MRGLRWRYTRLPSQVEDTLSGEEGNEEEEEEEAAPDPAAAPEDPTV). The segment covering 19 to 34 (LSGEEGNEEEEEEEAA) has biased composition (acidic residues). The TLDc domain occupies 54–215 (QVLSASEIRQ…IQELEAWLLS (162 aa)).

This sequence belongs to the OXR1 family.

The chain is TLD domain-containing protein 2 (TLDC2) from Homo sapiens (Human).